The chain runs to 67 residues: DNA-directed RNA polymerase subunit omega (67 aa).

Belongs to the RNA polymerase subunit omega family. In terms of assembly, the RNAP catalytic core consists of 2 alpha, 1 beta, 1 beta' and 1 omega subunit. When a sigma factor is associated with the core the holoenzyme is formed, which can initiate transcription.

It catalyses the reaction RNA(n) + a ribonucleoside 5'-triphosphate = RNA(n+1) + diphosphate. Promotes RNA polymerase assembly. Latches the N- and C-terminal regions of the beta' subunit thereby facilitating its interaction with the beta and alpha subunits. The chain is DNA-directed RNA polymerase subunit omega from Burkholderia pseudomallei (strain 1106a).